We begin with the raw amino-acid sequence, 134 residues long: Ribonuclease VapC2 (134 aa).

The 122-residue stretch at 3 to 124 folds into the PINc domain; it reads YMLDTNICVY…TNNIKEFKRI (122 aa). Residue D6 coordinates Mg(2+).

Belongs to the PINc/VapC protein family. In terms of assembly, forms complexes with VapB2; probably VapC2(4):VapB2(2) in the absence of DNA, and VapC2(4):VapB2(4) in the presence of DNA. Crystallizes as heterodimers with stoichiometry VapC2(4):VapB2(4) in the presence of its probable promoter DNA. The heterodimers are in contact via alternative VapC-VapC and VapB-VapB interactions. This subunit does not contact DNA. The cofactor is Mg(2+).

Its function is as follows. Toxic component of a type II toxin-antitoxin (TA) system. Has ssRNase activity. Upon expression in E.coli or S.cerevisiae inhibits growth in liquid culture; in S.cerevisiae its expression leads to apoptosis-like characteristics. Rapidly induces apoptosis (within 2 hours) upon microinjection into mouse fibroblasts (L929 line); pretreatment of cells with dexamethasone protects them. Probably contributes to host cell death if bacterial cell lysis occurs during host infection. Its toxic effect is neutralized by coexpression with cognate antitoxin VapB2, its RNase activity is partially inhibited in vitro by VapB2. In Rickettsia felis (strain ATCC VR-1525 / URRWXCal2) (Rickettsia azadi), this protein is Ribonuclease VapC2.